Consider the following 376-residue polypeptide: UDP-N-acetylglucosamine--N-acetylmuramyl-(pentapeptide) pyrophosphoryl-undecaprenol N-acetylglucosamine transferase (376 aa).

Residues 11 to 13, asparagine 117, arginine 160, serine 208, and glutamine 310 contribute to the UDP-N-acetyl-alpha-D-glucosamine site; that span reads TGG.

It belongs to the glycosyltransferase 28 family. MurG subfamily.

The protein localises to the cell inner membrane. The catalysed reaction is di-trans,octa-cis-undecaprenyl diphospho-N-acetyl-alpha-D-muramoyl-L-alanyl-D-glutamyl-meso-2,6-diaminopimeloyl-D-alanyl-D-alanine + UDP-N-acetyl-alpha-D-glucosamine = di-trans,octa-cis-undecaprenyl diphospho-[N-acetyl-alpha-D-glucosaminyl-(1-&gt;4)]-N-acetyl-alpha-D-muramoyl-L-alanyl-D-glutamyl-meso-2,6-diaminopimeloyl-D-alanyl-D-alanine + UDP + H(+). The protein operates within cell wall biogenesis; peptidoglycan biosynthesis. Its function is as follows. Cell wall formation. Catalyzes the transfer of a GlcNAc subunit on undecaprenyl-pyrophosphoryl-MurNAc-pentapeptide (lipid intermediate I) to form undecaprenyl-pyrophosphoryl-MurNAc-(pentapeptide)GlcNAc (lipid intermediate II). This is UDP-N-acetylglucosamine--N-acetylmuramyl-(pentapeptide) pyrophosphoryl-undecaprenol N-acetylglucosamine transferase from Rickettsia massiliae (strain Mtu5).